The chain runs to 521 residues: Runt-related transcription factor 2 (521 aa).

2 disordered regions span residues 18 to 59 (FWDP…QQQQ) and 222 to 340 (DGPR…RRIS). 2 stretches are compositionally biased toward low complexity: residues 21–33 (PSTS…PSSS) and 47–59 (AAQQ…QQQQ). One can recognise a Runt domain in the interval 101 to 229 (TMVEIIADHP…TVDGPREPRR (129 aa)). Residue Lys238 forms a Glycyl lysine isopeptide (Lys-Gly) (interchain with G-Cter in SUMO2) linkage. Residues 242–258 (FSDRLSDLGRIPHPSMR) form a required for interaction with FOXO1 region. Arg267 carries the post-translational modification Asymmetric dimethylarginine. The span at 267–326 (RPSLNSAPSPFNPQGQSQITDPRQAQSSPPWSYDQSYPSYLSQMTSPSIHSTTPLSSTRG) shows a compositional bias: polar residues. The interaction with KAT6A stretch occupies residues 336 to 439 (PRRISDDDTA…SQSQSGPFQT (104 aa)). Residue Ser340 is modified to Phosphoserine. The interaction with KAT6B stretch occupies residues 374-468 (RQFPSISSLT…VPGGDRSPSR (95 aa)). Ser451 carries the phosphoserine; by CDK1 modification. Residues 460–521 (PGGDRSPSRM…RMDESVWRPY (62 aa)) are disordered. Composition is skewed to polar residues over residues 473-492 (CTTT…NQND) and 499-511 (SHSS…NSSG). Basic and acidic residues predominate over residues 512-521 (RMDESVWRPY).

Heterodimer of an alpha and a beta subunit. The alpha subunit binds DNA as a monomer and through the Runt domain. DNA-binding is increased by heterodimerization. Interacts with XRCC6 (Ku70) and XRCC5 (Ku80). Interacts with HIVEP3. Interacts with IFI204. Interaction with SATB2; the interaction results in enhanced DNA binding and transactivation by these transcription factors. Binds to HIPK3. Interacts with FOXO1 (via a C-terminal region); the interaction inhibits RUNX2 transcriptional activity towards BGLAP. This interaction is prevented on insulin or IGF1 stimulation as FOXO1 is exported from the nucleus. Interacts with CCNB1, KAT6A and KAT6B. Interacts with FOXP3. Interacts with TMEM119. Interacts with OLFM2. Interacts with IPO7; the interaction inhibits RUNX2 nuclear translocation in osteoblasts. In terms of assembly, interacts with DDX5. In terms of processing, phosphorylated; probably by MAP kinases (MAPK). Phosphorylation by HIPK3 is required for the SPEN/MINT and FGF2 transactivation during osteoblastic differentiation. Phosphorylation at Ser-451 by CDK1 promotes endothelial cell proliferation required for tumor angiogenesis probably by facilitating cell cycle progression. Isoform 3 is phosphorylated on Ser-340. In terms of tissue distribution, specifically expressed in osteoblasts.

Its subcellular location is the nucleus. The protein localises to the cytoplasm. Functionally, transcription factor involved in osteoblastic differentiation and skeletal morphogenesis. Essential for the maturation of osteoblasts and both intramembranous and endochondral ossification. CBF binds to the core site, 5'-PYGPYGGT-3', of a number of enhancers and promoters, including murine leukemia virus, polyomavirus enhancer, T-cell receptor enhancers, osteocalcin, osteopontin, bone sialoprotein, alpha 1(I) collagen, LCK, IL-3 and GM-CSF promoters. In osteoblasts, supports transcription activation: synergizes with SPEN/MINT to enhance FGFR2-mediated activation of the osteocalcin FGF-responsive element (OCFRE). Inhibits KAT6B-dependent transcriptional activation. The sequence is that of Runt-related transcription factor 2 (RUNX2) from Homo sapiens (Human).